The primary structure comprises 205 residues: Small ribosomal subunit protein uS2 (205 aa).

Belongs to the universal ribosomal protein uS2 family.

This is Small ribosomal subunit protein uS2 (rps2) from Aeropyrum pernix (strain ATCC 700893 / DSM 11879 / JCM 9820 / NBRC 100138 / K1).